The primary structure comprises 185 residues: MALQIHSPCSFSTRPYHLFFTTRNPRFAIKCQNSQIESDTTEDPSRSKNSSSSGVGFGSPASSSSPAKKLSAATSGNKKGKGKREVNRRAPVEKPVFMSEEGAAKAEEQRQNENAFLLTWLGLGIVILIEGIILAASGFLPEELDKLFVKYVYPVFTPSVVLFVAGTTAYGVLKYIQNEKMKGQE.

The transit peptide at 1–46 (MALQIHSPCSFSTRPYHLFFTTRNPRFAIKCQNSQIESDTTEDPSR) directs the protein to the chloroplast. Residues 35–105 (QIESDTTEDP…VFMSEEGAAK (71 aa)) form a disordered region. Residues 47–75 (SKNSSSSGVGFGSPASSSSPAKKLSAATS) are compositionally biased toward low complexity. Residues 83-92 (KREVNRRAPV) show a composition bias toward basic and acidic residues. Transmembrane regions (helical) follow at residues 115–135 (AFLL…IILA) and 152–172 (VYPV…AYGV).

It localises to the plastid. Its subcellular location is the chloroplast membrane. This chain is Protein LPA2, found in Arabidopsis thaliana (Mouse-ear cress).